The sequence spans 1458 residues: Phospholipase B1, membrane-associated (1458 aa).

The first 21 residues, Met1 to Pro21, serve as a signal peptide directing secretion. The Extracellular portion of the chain corresponds to Gln22 to Tyr1417. 3 repeat units span residues Glu39–Ser347, Val362–Ser707, and Met708–Ser1054. A 4 X 308-326 AA approximate repeats region spans residues Glu39 to Ser1402. Asn173 and Asn240 each carry an N-linked (GlcNAc...) asparagine glycan. Ser400 is a catalytic residue. N-linked (GlcNAc...) asparagine glycosylation is present at Asn493. Asp514 is a catalytic residue. 2 N-linked (GlcNAc...) asparagine glycosylation sites follow: Asn529 and Asn590. His655 is a catalytic residue. Residues Asn690, Asn783, Asn797, Asn809, Asn1055, Asn1113, Asn1275, and Asn1378 are each glycosylated (N-linked (GlcNAc...) asparagine). Residues Ile1064–Ser1402 form repeat 4. Positions Arg1403 to Arg1445 are necessary for membrane localization. A helical transmembrane segment spans residues Trp1418–Trp1438. Residues Arg1439–Leu1458 lie on the Cytoplasmic side of the membrane.

The protein belongs to the 'GDSL' lipolytic enzyme family. Phospholipase B1 subfamily. Post-translationally, undergoes proteolytic cleavage in the ileum. As to expression, expressed in the epidermis (at protein level).

It is found in the apical cell membrane. It catalyses the reaction a 1,2-diacyl-sn-glycero-3-phosphocholine + H2O = a 1-acyl-sn-glycero-3-phosphocholine + a fatty acid + H(+). The enzyme catalyses a 1-O-alkyl-2-acyl-sn-glycero-3-phosphocholine + H2O = a 1-O-alkyl-sn-glycero-3-phosphocholine + a fatty acid + H(+). The catalysed reaction is a 1-acyl-sn-glycero-3-phosphocholine + H2O = sn-glycerol 3-phosphocholine + a fatty acid + H(+). It carries out the reaction a triacylglycerol + H2O = a diacylglycerol + a fatty acid + H(+). It catalyses the reaction 1,2-dihexadecanoyl-sn-glycero-3-phosphocholine + H2O = 1-hexadecanoyl-sn-glycero-3-phosphocholine + hexadecanoate + H(+). The enzyme catalyses 1-hexadecanoyl-2-(9Z-octadecenoyl)-sn-glycero-3-phosphocholine + H2O = 1-hexadecanoyl-sn-glycero-3-phosphocholine + (9Z)-octadecenoate + H(+). The catalysed reaction is 1,2-di-(9Z-octadecenoyl)-sn-glycero-3-phosphocholine + H2O = 1-(9Z-octadecenoyl)-sn-glycero-3-phosphocholine + (9Z)-octadecenoate + H(+). It carries out the reaction 1-hexadecanoyl-2-(9Z,12Z-octadecadienoyl)-sn-glycero-3-phosphocholine + H2O = (9Z,12Z)-octadecadienoate + 1-hexadecanoyl-sn-glycero-3-phosphocholine + H(+). It catalyses the reaction 1-hexadecanoyl-2-(9Z,12Z-octadecadienoyl)-sn-glycero-3-phosphocholine + H2O = 2-(9Z,12Z-octadecadienoyl)-sn-glycero-3-phosphocholine + hexadecanoate + H(+). The enzyme catalyses 1-hexadecanoyl-2-(9Z-octadecenoyl)-sn-glycero-3-phosphoethanolamine + H2O = 1-hexadecanoyl-sn-glycero-3-phosphoethanolamine + (9Z)-octadecenoate + H(+). The catalysed reaction is 1-hexadecanoyl-2-(9Z-octadecenoyl)-sn-glycero-3-phospho-(1'-sn-glycerol) + H2O = 1-hexadecanoyl-sn-glycero-3-phospho-(1'-sn-glycerol) + (9Z)-octadecenoate + H(+). It carries out the reaction 1,2-dihexadecanoyl-sn-glycero-3-phosphocholine + 2 H2O = sn-glycerol 3-phosphocholine + 2 hexadecanoate + 2 H(+). It catalyses the reaction 1-O-hexadecyl-2-(9Z)-octadecenoyl-sn-glycero-3-phosphocholine + H2O = 1-O-hexadecyl-sn-glycero-3-phosphocholine + (9Z)-octadecenoate + H(+). The enzyme catalyses 1-hexadecanoyl-sn-glycero-3-phosphocholine + H2O = sn-glycerol 3-phosphocholine + hexadecanoate + H(+). The catalysed reaction is 1,2,3-tri-(9Z-octadecenoyl)-glycerol + H2O = di-(9Z)-octadecenoylglycerol + (9Z)-octadecenoate + H(+). It carries out the reaction 1-hexadecanoyl-2-(9Z)-octadecenoyl-3-octadecanoyl-sn-glycerol + H2O = 1-hexadecanoyl-2-(9Z-octadecenoyl)-sn-glycerol + octadecanoate + H(+). It catalyses the reaction 1,3-dihexadecanoyl-2-(9Z-octadecenoyl)glycerol + H2O = 1,3-dihexadecanoylglycerol + (9Z)-octadecenoate + H(+). The enzyme catalyses 1,3-dihexadecanoyl-2-(9Z-octadecenoyl)glycerol + H2O = 1-hexadecanoyl-2-(9Z-octadecenoyl)-glycerol + hexadecanoate + H(+). The catalysed reaction is 1-hexadecanoyl-2-(9Z)-octadecenoyl-3-octadecanoyl-sn-glycerol + H2O = 1-hexadecanoyl-3-octadecanoyl-sn-glycerol + (9Z)-octadecenoate + H(+). It carries out the reaction 1-hexadecanoyl-2-(9Z)-octadecenoyl-3-octadecanoyl-sn-glycerol + H2O = 2-(9Z-octadecenoyl)-3-octadecanoyl-sn-glycerol + hexadecanoate + H(+). It catalyses the reaction 1-octadecanoyl-2-(9Z,12Z)-octadecadienoyl-sn-glycerol + H2O = 1-octadecanoyl-sn-glycerol + (9Z,12Z)-octadecadienoate + H(+). The enzyme catalyses 1,2-di-(9Z-octadecenoyl)-sn-glycerol + H2O = 1-(9Z-octadecenoyl)-sn-glycerol + (9Z)-octadecenoate + H(+). The catalysed reaction is 2,3-di-(9Z)-octadecenoyl-sn-glycerol + H2O = 3-(9Z-octadecenoyl)-sn-glycerol + (9Z)-octadecenoate + H(+). It carries out the reaction 1,3-di-(9Z-octadecenoyl)-glycerol + H2O = 1-(9Z-octadecenoyl)-glycerol + (9Z)-octadecenoate + H(+). It catalyses the reaction 1-(9Z-octadecenoyl)-glycerol + H2O = glycerol + (9Z)-octadecenoate + H(+). The enzyme catalyses 2-(9Z-octadecenoyl)-glycerol + H2O = glycerol + (9Z)-octadecenoate + H(+). Its function is as follows. Calcium-independent membrane-associated phospholipase that catalyzes complete diacylation of phospholipids by hydrolyzing both sn-1 and sn-2 fatty acyl chains attached to the glycerol backbone (phospholipase B activity). Has dual phospholipase and lysophospholipase activities toward diacylphospholipids. Preferentially cleaves sn-2 ester bonds over sn-1 bonds. Acts as a lipase toward glycerolipid substrates. Hydrolyzes fatty acyl chains of diacylglycerols with preference for the sn-2 position and of triacylglycerols with not positional selectivity. May also hydrolyze long chain retinyl esters such as retinyl palmitate. May contribute to digestion of dietary phospholipids, glycerolipids and retinoids, facilitating lipid absorption at the brush border. The polypeptide is Phospholipase B1, membrane-associated (PLB1) (Homo sapiens (Human)).